The following is a 291-amino-acid chain: Release factor glutamine methyltransferase (291 aa).

S-adenosyl-L-methionine-binding positions include 127–131 (GTGSG), aspartate 150, tryptophan 179, and asparagine 196. 196 to 199 (NPPY) contacts substrate.

It belongs to the protein N5-glutamine methyltransferase family. PrmC subfamily.

The enzyme catalyses L-glutaminyl-[peptide chain release factor] + S-adenosyl-L-methionine = N(5)-methyl-L-glutaminyl-[peptide chain release factor] + S-adenosyl-L-homocysteine + H(+). Methylates the class 1 translation termination release factors RF1/PrfA and RF2/PrfB on the glutamine residue of the universally conserved GGQ motif. The sequence is that of Release factor glutamine methyltransferase from Thermosynechococcus vestitus (strain NIES-2133 / IAM M-273 / BP-1).